A 232-amino-acid chain; its full sequence is LexA repressor (232 aa).

A DNA-binding region (H-T-H motif) is located at residues 35–55; the sequence is IREIGDAAGLQSTSSVAYQLK. Positions 61–85 are enriched in basic and acidic residues; the sequence is GFLRRDPNKPRAVDVRHLPETESRS. Residues 61 to 104 form a disordered region; the sequence is GFLRRDPNKPRAVDVRHLPETESRSSKAATQAKSKAPQAGVHDP. Residues 86–99 are compositionally biased toward low complexity; that stretch reads SKAATQAKSKAPQA. Catalysis depends on for autocatalytic cleavage activity residues S156 and K193.

The protein belongs to the peptidase S24 family. Homodimer.

The enzyme catalyses Hydrolysis of Ala-|-Gly bond in repressor LexA.. In terms of biological role, represses a number of genes involved in the response to DNA damage (SOS response), including recA and lexA. In the presence of single-stranded DNA, RecA interacts with LexA causing an autocatalytic cleavage which disrupts the DNA-binding part of LexA, leading to derepression of the SOS regulon and eventually DNA repair. This is LexA repressor from Corynebacterium glutamicum (strain ATCC 13032 / DSM 20300 / JCM 1318 / BCRC 11384 / CCUG 27702 / LMG 3730 / NBRC 12168 / NCIMB 10025 / NRRL B-2784 / 534).